The chain runs to 324 residues: Olfactory receptor 1L3 (324 aa).

Residues 1 to 25 (MGMSNLTRLSEFILLGLSSRSEDQR) are Extracellular-facing. N-linked (GlcNAc...) asparagine glycosylation is present at N5. A helical transmembrane segment spans residues 26 to 49 (PLFALFLIIYLVTLMGNLLIILAI). The Cytoplasmic portion of the chain corresponds to 50 to 57 (HSDPRLQN). Residues 58–79 (PMYFFLSILSFADICYTTVIVP) traverse the membrane as a helical segment. The Extracellular portion of the chain corresponds to 80–100 (KMLVNFLSEKKTISYAECLAQ). C97 and C189 form a disulfide bridge. The chain crosses the membrane as a helical span at residues 101–120 (MYFFLVFGNIDSYLLAAMAI). Over 121-139 (NRCVAICNPFHYVTVMNRR) the chain is Cytoplasmic. The helical transmembrane segment at 140–158 (CCVLLLAFPITFSYFHSLL) threads the bilayer. Over 159–196 (HVLLVNRLTFCTSNVIHHFFCDVNPVLKLSCSSTFVNE) the chain is Extracellular. The chain crosses the membrane as a helical span at residues 197–219 (IVAMTEGLASVMAPFVCIIISYL). Residues 220 to 236 (RILIAVLKIPSAAGKHK) are Cytoplasmic-facing. Residues 237-259 (AFSTCSSHLTVVILFYGSISYVY) traverse the membrane as a helical segment. The Extracellular segment spans residues 260–271 (LQPLSSYTVKDR). Residues 272–291 (IATINYTVLTSVLNPFIYSL) traverse the membrane as a helical segment. The Cytoplasmic segment spans residues 292–324 (RNKDMKRGLQKLINKIKSQMSRFSTKTNKICGP).

This sequence belongs to the G-protein coupled receptor 1 family.

It is found in the cell membrane. Functionally, odorant receptor. The polypeptide is Olfactory receptor 1L3 (OR1L3) (Homo sapiens (Human)).